We begin with the raw amino-acid sequence, 396 residues long: Elongation factor Tu (396 aa).

The 197-residue stretch at 10–206 (KPHCNIGTIG…AVDAYIPQPE (197 aa)) folds into the tr-type G domain. The tract at residues 19–26 (GHVDHGKT) is G1. 19 to 26 (GHVDHGKT) contacts GTP. A Mg(2+)-binding site is contributed by Thr26. The interval 60 to 64 (GITIS) is G2. The tract at residues 81–84 (DCPG) is G3. GTP is bound by residues 81 to 85 (DCPGH) and 136 to 139 (NKVD). The interval 136–139 (NKVD) is G4. The tract at residues 174–176 (SAL) is G5.

The protein belongs to the TRAFAC class translation factor GTPase superfamily. Classic translation factor GTPase family. EF-Tu/EF-1A subfamily. In terms of assembly, monomer.

Its subcellular location is the cytoplasm. The enzyme catalyses GTP + H2O = GDP + phosphate + H(+). GTP hydrolase that promotes the GTP-dependent binding of aminoacyl-tRNA to the A-site of ribosomes during protein biosynthesis. This chain is Elongation factor Tu, found in Parvibaculum lavamentivorans (strain DS-1 / DSM 13023 / NCIMB 13966).